Reading from the N-terminus, the 38-residue chain is Large ribosomal subunit protein bL36 (38 aa).

This sequence belongs to the bacterial ribosomal protein bL36 family.

This is Large ribosomal subunit protein bL36 (rpmJ) from Streptococcus pneumoniae serotype 4 (strain ATCC BAA-334 / TIGR4).